We begin with the raw amino-acid sequence, 843 residues long: Beta-mannosidase B (843 aa).

Residue Glu430 is the Proton donor of the active site. A glycan (N-linked (GlcNAc...) asparagine) is linked at Asn721.

This sequence belongs to the glycosyl hydrolase 2 family. Beta-mannosidase B subfamily.

The catalysed reaction is Hydrolysis of terminal, non-reducing beta-D-mannose residues in beta-D-mannosides.. Its pathway is glycan metabolism; N-glycan degradation. Its function is as follows. Exoglycosidase that cleaves the single beta-linked mannose residue from the non-reducing end of beta-mannosidic oligosaccharides of various complexity and length. Prefers mannobiose over mannotriose and has no activity against polymeric mannan. Is also severely restricted by galactosyl substitutions at the +1 subsite. This chain is Beta-mannosidase B (mndB), found in Aspergillus terreus (strain NIH 2624 / FGSC A1156).